Consider the following 299-residue polypeptide: Elongation factor Ts, mitochondrial (299 aa).

A mitochondrion-targeting transit peptide spans methionine 1–valine 18.

It belongs to the EF-Ts family.

It localises to the mitochondrion. Functionally, associates with the EF-Tu.GDP complex and induces the exchange of GDP to GTP. It remains bound to the aminoacyl-tRNA.EF-Tu.GTP complex up to the GTP hydrolysis stage on the ribosome. The chain is Elongation factor Ts, mitochondrial (tsf1) from Schizosaccharomyces pombe (strain 972 / ATCC 24843) (Fission yeast).